Reading from the N-terminus, the 465-residue chain is Phosphatidylserine synthase 1 (465 aa).

Over 1–35 (MATTFRSQTLSKDDVNYRMHFRMINEQQVEDITIQ) the chain is Cytoplasmic. Residues 36 to 56 (FFYKPHTISLLTVTVLSLMYF) traverse the membrane as a helical segment. Topologically, residues 57-70 (AFTRDDGDPDSNLR) are lumenal. A helical membrane pass occupies residues 71-91 (VGLILLVSFFLVISVLAFPNG). Over 92–102 (PFTRPHPAIWR) the chain is Cytoplasmic. Residues 103 to 123 (IVFGLSVLYFLFLVFIIFLNW) form a helical membrane-spanning segment. Residues 124–286 (DQVKALMFWL…WLDPKSSLQR (163 aa)) are Lumenal-facing. The helical transmembrane segment at 287–307 (VMGVYLFMIIWQLTELNTFFL) threads the bilayer. The Cytoplasmic segment spans residues 308–309 (KH). A helical transmembrane segment spans residues 310–330 (IFVFPACHALSWCRILFIGII). Residues 331 to 355 (TAPTVRQYYAYLTDTQCKRVGTQCW) lie on the Lumenal side of the membrane. The chain crosses the membrane as a helical span at residues 356 to 376 (VFGAIAFLEALACIKFGQDLF). The Cytoplasmic segment spans residues 377–380 (SKTQ). A helical membrane pass occupies residues 381–401 (ILYVILWLVCLAFITFLCLYV). Residues 402–465 (MVWYAENYGP…DSRTINGMEK (64 aa)) lie on the Lumenal side of the membrane. A disordered region spans residues 446-465 (CSTRKRRDSGDSRTINGMEK).

It belongs to the phosphatidyl serine synthase family.

The protein localises to the endoplasmic reticulum membrane. The catalysed reaction is a 1,2-diacyl-sn-glycero-3-phosphoethanolamine + L-serine = a 1,2-diacyl-sn-glycero-3-phospho-L-serine + ethanolamine. It catalyses the reaction a 1,2-diacyl-sn-glycero-3-phosphocholine + L-serine = a 1,2-diacyl-sn-glycero-3-phospho-L-serine + choline. It functions in the pathway phospholipid metabolism; phosphatidylserine biosynthesis. Functionally, catalyzes a base-exchange reaction in which the polar head group of phosphatidylethanolamine (PE) or phosphatidylcholine (PC) is replaced by L-serine. Catalyzes mainly the conversion of phosphatidylcholine but also converts, in vitro and to a lesser extent, phosphatidylethanolamine. This is Phosphatidylserine synthase 1 (ptdss1) from Danio rerio (Zebrafish).